The sequence spans 406 residues: Eukaryotic initiation factor 4A-I (406 aa).

The tract at residues 1–21 is disordered; the sequence is MSASQDSRSRDNGPDGMEPEG. The residue at position 2 (S2) is an N-acetylserine. S4 is subject to Phosphoserine. The short motif at 32–60 is the Q motif element; that stretch reads DSLDDMNLSESLLRGIYAYGFEKPSAIQQ. One can recognise a Helicase ATP-binding domain in the interval 63–234; sequence ILSCIKGYDV…KKFMRDPIRI (172 aa). Position 76–83 (76–83) interacts with ATP; it reads AQSGTGKT. K118 bears the N6-acetyllysine mark. K146 is covalently cross-linked (Glycyl lysine isopeptide (Lys-Gly) (interchain with G-Cter in SUMO2)). Position 158 is a phosphothreonine (T158). K174 carries the N6-acetyllysine modification. Residues 182–185 carry the DEAD box motif; sequence DEAD. K193 carries the post-translational modification N6-acetyllysine. K225 participates in a covalent cross-link: Glycyl lysine isopeptide (Lys-Gly) (interchain with G-Cter in SUMO2). At K238 the chain carries N6-acetyllysine; alternate. K238 participates in a covalent cross-link: Glycyl lysine isopeptide (Lys-Gly) (interchain with G-Cter in SUMO2); alternate. The Helicase C-terminal domain maps to 245-406; it reads GIRQFYINVE…EMPLNVADLI (162 aa). Residues K309, K369, and K381 each participate in a glycyl lysine isopeptide (Lys-Gly) (interchain with G-Cter in SUMO2) cross-link.

It belongs to the DEAD box helicase family. eIF4A subfamily. In terms of assembly, eIF4F is a multi-subunit complex, the composition of which varies with external and internal environmental conditions. It is composed of at least EIF4A, EIF4E and EIF4G1/EIF4G3. Interacts with PAIP1, EIF4E and UPF2. Found in a complex with XPO7, EIF4A1, ARHGAP1, VPS26A, VPS29, VPS35 and SFN. May interact with NOM1. Interacts with PDCD4; this interferes with the interaction between EIF4A and EIF4G. Interacts with RBM4. Interacts with DDX3X in an RNA-independent manner. Interacts with PKP1 (via N-terminus); the interaction promotes EIF4A1 recruitment to the cap-dependent translation complex and EIF4A1 ATPase activity.

The protein localises to the cytoplasm. It is found in the perinuclear region. Its subcellular location is the cell membrane. It localises to the stress granule. It carries out the reaction ATP + H2O = ADP + phosphate + H(+). Its function is as follows. ATP-dependent RNA helicase which is a subunit of the eIF4F complex involved in cap recognition and is required for mRNA binding to ribosome. In the current model of translation initiation, eIF4A unwinds RNA secondary structures in the 5'-UTR of mRNAs which is necessary to allow efficient binding of the small ribosomal subunit, and subsequent scanning for the initiator codon. As a result, promotes cell proliferation and growth. This chain is Eukaryotic initiation factor 4A-I (EIF4A1), found in Pongo abelii (Sumatran orangutan).